The chain runs to 254 residues: Bowman-Birk type bran trypsin inhibitor (254 aa).

The signal sequence occupies residues Met-1–Ala-22. Residues His-23–Ser-118 constitute a propeptide that is removed on maturation. Repeats lie at residues Lys-46–Glu-120, Arg-121–Pro-187, and Arg-188–Arg-251. Disulfide bonds link Cys-125–Cys-185, Cys-126–Cys-143, Cys-152–Cys-159, Cys-156–Cys-172, Cys-193–Cys-248, Cys-194–Cys-209, Cys-199–Cys-207, Cys-216–Cys-223, and Cys-220–Cys-236. Residues Ala-252–Asn-254 constitute a propeptide that is removed on maturation.

The protein belongs to the Bowman-Birk serine protease inhibitor family.

This Oryza sativa subsp. japonica (Rice) protein is Bowman-Birk type bran trypsin inhibitor (RBBI3.3).